A 197-amino-acid polypeptide reads, in one-letter code: HTH-type transcriptional regulator BetI (197 aa).

An HTH tetR-type domain is found at 8–68 (PIRRQQLIQA…ATMRHLMNAL (61 aa)). Residues 31–50 (SIALIARLAGVSNGIISHYF) constitute a DNA-binding region (H-T-H motif).

Its pathway is amine and polyamine biosynthesis; betaine biosynthesis via choline pathway [regulation]. Functionally, repressor involved in the biosynthesis of the osmoprotectant glycine betaine. It represses transcription of the choline transporter BetT and the genes of BetAB involved in the synthesis of glycine betaine. In Pseudomonas savastanoi pv. phaseolicola (strain 1448A / Race 6) (Pseudomonas syringae pv. phaseolicola (strain 1448A / Race 6)), this protein is HTH-type transcriptional regulator BetI.